The following is a 295-amino-acid chain: Pyridoxal 5'-phosphate synthase subunit PdxS (295 aa).

Aspartate 25 is a D-ribose 5-phosphate binding site. Lysine 82 acts as the Schiff-base intermediate with D-ribose 5-phosphate in catalysis. Residue glycine 154 coordinates D-ribose 5-phosphate. Arginine 166 serves as a coordination point for D-glyceraldehyde 3-phosphate. Residues glycine 215 and 236–237 (GS) contribute to the D-ribose 5-phosphate site.

The protein belongs to the PdxS/SNZ family. In terms of assembly, in the presence of PdxT, forms a dodecamer of heterodimers.

It carries out the reaction aldehydo-D-ribose 5-phosphate + D-glyceraldehyde 3-phosphate + L-glutamine = pyridoxal 5'-phosphate + L-glutamate + phosphate + 3 H2O + H(+). Its pathway is cofactor biosynthesis; pyridoxal 5'-phosphate biosynthesis. Functionally, catalyzes the formation of pyridoxal 5'-phosphate from ribose 5-phosphate (RBP), glyceraldehyde 3-phosphate (G3P) and ammonia. The ammonia is provided by the PdxT subunit. Can also use ribulose 5-phosphate and dihydroxyacetone phosphate as substrates, resulting from enzyme-catalyzed isomerization of RBP and G3P, respectively. This chain is Pyridoxal 5'-phosphate synthase subunit PdxS, found in Actinobacillus pleuropneumoniae serotype 7 (strain AP76).